Consider the following 844-residue polypeptide: Putative ubiquitin thioesterase 232R (844 aa).

Disordered regions lie at residues 136–223 (NSST…DEAE), 261–287 (SRRKSPSPSPVPPSTRCDPTTTAPPME), 326–377 (LLNG…PELT), and 422–541 (QKKQ…KLSV). The segment covering 137-216 (SSTRSRSPSV…PSRQSVRQSS (80 aa)) has biased composition (low complexity). Composition is skewed to low complexity over residues 332–341 (RPSPSLPQSR) and 354–364 (RSPSVGSPSVR). Residues 429–438 (SPSPTPPSPV) are compositionally biased toward pro residues. Positions 472–485 (VQKKMGKSGEREPK) are enriched in basic and acidic residues. A compositionally biased stretch (low complexity) spans 504-518 (SLRSRLSTQQQTQQS). The span at 526 to 535 (ESIKPEESVR) shows a compositional bias: basic and acidic residues. The region spanning 590–725 (YTVKQVSGDG…NYHYTSLVPI (136 aa)) is the OTU domain. D598 is a catalytic residue. The Nucleophile role is filled by C601. Residue H718 is part of the active site.

The catalysed reaction is Thiol-dependent hydrolysis of ester, thioester, amide, peptide and isopeptide bonds formed by the C-terminal Gly of ubiquitin (a 76-residue protein attached to proteins as an intracellular targeting signal).. Hydrolase that can remove conjugated ubiquitin from proteins and may therefore play an important regulatory role at the level of protein turnover by preventing degradation. This is Putative ubiquitin thioesterase 232R from Aedes vexans (Inland floodwater mosquito).